The chain runs to 160 residues: S-ribosylhomocysteine lyase (160 aa).

Fe cation is bound by residues His-57, His-61, and Cys-127.

This sequence belongs to the LuxS family. In terms of assembly, homodimer. It depends on Fe cation as a cofactor.

The catalysed reaction is S-(5-deoxy-D-ribos-5-yl)-L-homocysteine = (S)-4,5-dihydroxypentane-2,3-dione + L-homocysteine. Its function is as follows. Involved in the synthesis of autoinducer 2 (AI-2) which is secreted by bacteria and is used to communicate both the cell density and the metabolic potential of the environment. The regulation of gene expression in response to changes in cell density is called quorum sensing. Catalyzes the transformation of S-ribosylhomocysteine (RHC) to homocysteine (HC) and 4,5-dihydroxy-2,3-pentadione (DPD). The protein is S-ribosylhomocysteine lyase of Streptococcus agalactiae serotype V (strain ATCC BAA-611 / 2603 V/R).